A 361-amino-acid polypeptide reads, in one-letter code: uncharacterized protein (361 aa).

WD repeat units follow at residues 57–96 (RHKK…VSSK), 103–142 (KEIS…GIIH), 146–184 (DHID…KPIL), 187–229 (EQDE…DHTD), 237–275 (SHDF…YERI), and 280–318 (SSRS…GDES). Positions 311-361 (DQKEGDESSSSDNLDSDEDSSSDSEFSSPKKKKKVGNQGKKPLGTDFFDGL) are disordered.

It localises to the nucleus. The protein resides in the nucleolus. This is an uncharacterized protein from Schizosaccharomyces pombe (strain 972 / ATCC 24843) (Fission yeast).